A 665-amino-acid chain; its full sequence is Golgi-associated RAB2B interactor protein 3 (665 aa).

3 disordered regions span residues 211–240 (EIRG…AGGE), 272–296 (AAAG…GTAG), and 480–590 (SEGY…GSVS). The span at 219-232 (NSRPQSSPTVSEAT) shows a compositional bias: polar residues. Basic and acidic residues predominate over residues 499–513 (EAKEKRERREKDRTS). Composition is skewed to basic residues over residues 514-538 (SRKS…RKTS) and 554-566 (GHGR…HSSS). The Bipartite nuclear localization signal signature appears at 515 to 531 (RKSSHHRRTGMSRHSSK). A Phosphoserine modification is found at S652.

It belongs to the GARIN family. In terms of assembly, interacts (via N-terminus) with RAB2B (in GTP-bound form). Interacts with FRG1. As to expression, expressed in adult spermatocytes and spermatids.

Its subcellular location is the golgi apparatus. It is found in the nucleus. It localises to the cajal body. May be involved in RNA biogenesis. The polypeptide is Golgi-associated RAB2B interactor protein 3 (Mus musculus (Mouse)).